A 213-amino-acid chain; its full sequence is Glycerol-3-phosphate acyltransferase (213 aa).

6 helical membrane passes run 2 to 22 (ITIV…GLWI), 52 to 74 (AGMA…PIIF), 81 to 100 (PLIF…FAGF), 112 to 132 (VIFG…FGAL), 143 to 163 (VTAS…GFIL), and 164 to 184 (SNYD…IIIR).

This sequence belongs to the PlsY family. As to quaternary structure, probably interacts with PlsX.

The protein localises to the cell membrane. The catalysed reaction is an acyl phosphate + sn-glycerol 3-phosphate = a 1-acyl-sn-glycero-3-phosphate + phosphate. It participates in lipid metabolism; phospholipid metabolism. Its function is as follows. Catalyzes the transfer of an acyl group from acyl-phosphate (acyl-PO(4)) to glycerol-3-phosphate (G3P) to form lysophosphatidic acid (LPA). This enzyme utilizes acyl-phosphate as fatty acyl donor, but not acyl-CoA or acyl-ACP. The protein is Glycerol-3-phosphate acyltransferase of Streptococcus pneumoniae (strain ATCC 700669 / Spain 23F-1).